The chain runs to 351 residues: Phosphoribosylformylglycinamidine cyclo-ligase (351 aa).

This sequence belongs to the AIR synthase family.

Its subcellular location is the cytoplasm. It catalyses the reaction 2-formamido-N(1)-(5-O-phospho-beta-D-ribosyl)acetamidine + ATP = 5-amino-1-(5-phospho-beta-D-ribosyl)imidazole + ADP + phosphate + H(+). Its pathway is purine metabolism; IMP biosynthesis via de novo pathway; 5-amino-1-(5-phospho-D-ribosyl)imidazole from N(2)-formyl-N(1)-(5-phospho-D-ribosyl)glycinamide: step 2/2. This Oleidesulfovibrio alaskensis (strain ATCC BAA-1058 / DSM 17464 / G20) (Desulfovibrio alaskensis) protein is Phosphoribosylformylglycinamidine cyclo-ligase.